The sequence spans 222 residues: MRVSQSLVPFAIIALVLSFVNAYDPSPLQDFCVAIDDLKGVFVNGRFCKDPKRVDAKDFFFSGLNVPGNTNNQVGSNVTTVNVDQIPGLNTMGISLVRIDYAPHGQNPPHTHPRGSEILVLVEGTLYVGFVSSNQDNNRLFAKVLHPGDVFVFPIGMIHFQVNVGKIPAVAFAGLSSQNAGVITIANTVFGSNPPIYPELLARAFQLDASVVKELQAKFGSI.

The N-terminal stretch at 1-22 is a signal peptide; sequence MRVSQSLVPFAIIALVLSFVNA. Cysteine 32 and cysteine 48 form a disulfide bridge. The Cupin type-1 domain occupies 62 to 213; it reads SGLNVPGNTN…AFQLDASVVK (152 aa). Residue asparagine 77 is glycosylated (N-linked (GlcNAc...) asparagine). Mn(2+) contacts are provided by histidine 110, histidine 112, glutamate 117, and histidine 159.

The protein belongs to the germin family. As to quaternary structure, oligomer (believed to be a pentamer but probably hexamer). In terms of tissue distribution, expressed in stems and developing embryos.

It is found in the secreted. The protein resides in the extracellular space. The protein localises to the apoplast. May play a role in plant defense. Probably has no oxalate oxidase activity even if the active site is conserved. This Arabidopsis thaliana (Mouse-ear cress) protein is Germin-like protein subfamily 1 member 20 (GLP5A).